The following is a 318-amino-acid chain: Ribose-phosphate pyrophosphokinase 1 (318 aa).

ATP is bound by residues 43–45 and 102–103; these read DGE and RQ. Mg(2+) contacts are provided by His136 and Asp176. Lys199 is an active-site residue. D-ribose 5-phosphate is bound by residues Arg201, Asp225, and 229-233; that span reads DTAGT.

It belongs to the ribose-phosphate pyrophosphokinase family. Class I subfamily. In terms of assembly, homohexamer. Mg(2+) is required as a cofactor.

It localises to the cytoplasm. It catalyses the reaction D-ribose 5-phosphate + ATP = 5-phospho-alpha-D-ribose 1-diphosphate + AMP + H(+). It participates in metabolic intermediate biosynthesis; 5-phospho-alpha-D-ribose 1-diphosphate biosynthesis; 5-phospho-alpha-D-ribose 1-diphosphate from D-ribose 5-phosphate (route I): step 1/1. In terms of biological role, involved in the biosynthesis of the central metabolite phospho-alpha-D-ribosyl-1-pyrophosphate (PRPP) via the transfer of pyrophosphoryl group from ATP to 1-hydroxyl of ribose-5-phosphate (Rib-5-P). This is Ribose-phosphate pyrophosphokinase 1 from Listeria monocytogenes serotype 4b (strain F2365).